Reading from the N-terminus, the 455-residue chain is Membrane-bound lytic murein transglycosylase F (455 aa).

The signal sequence occupies residues 1 to 21; sequence MPKSAVSLFAILLLAASVITA. Residues 22 to 264 form a non-LT domain region; that stretch reads CSPQTRPDAM…HIKEQHFGHV (243 aa). An LT domain region spans residues 265–455; it reads KQFNYVTTSL…LKYLDEQGRL (191 aa). The active site involves E309.

In the N-terminal section; belongs to the bacterial solute-binding protein 3 family. The protein in the C-terminal section; belongs to the transglycosylase Slt family.

It localises to the cell outer membrane. It catalyses the reaction Exolytic cleavage of the (1-&gt;4)-beta-glycosidic linkage between N-acetylmuramic acid (MurNAc) and N-acetylglucosamine (GlcNAc) residues in peptidoglycan, from either the reducing or the non-reducing ends of the peptidoglycan chains, with concomitant formation of a 1,6-anhydrobond in the MurNAc residue.. Functionally, murein-degrading enzyme that degrades murein glycan strands and insoluble, high-molecular weight murein sacculi, with the concomitant formation of a 1,6-anhydromuramoyl product. Lytic transglycosylases (LTs) play an integral role in the metabolism of the peptidoglycan (PG) sacculus. Their lytic action creates space within the PG sacculus to allow for its expansion as well as for the insertion of various structures such as secretion systems and flagella. The chain is Membrane-bound lytic murein transglycosylase F from Idiomarina loihiensis (strain ATCC BAA-735 / DSM 15497 / L2-TR).